The sequence spans 785 residues: Phenylalanine--tRNA ligase beta subunit (785 aa).

The 112-residue stretch at 39–150 folds into the tRNA-binding domain; sequence RTWAAGVVVG…ASLPLGLDVG (112 aa). A B5 domain is found at 400-476; that stretch reads RENRVVSLRP…RVVGYDRFAP (77 aa). Positions 454, 460, 463, and 464 each coordinate Mg(2+). In terms of domain architecture, FDX-ACB spans 692-784; sequence SPFPPAARDL…LAERYSVDLR (93 aa).

Belongs to the phenylalanyl-tRNA synthetase beta subunit family. Type 1 subfamily. As to quaternary structure, tetramer of two alpha and two beta subunits. Requires Mg(2+) as cofactor.

It localises to the cytoplasm. The catalysed reaction is tRNA(Phe) + L-phenylalanine + ATP = L-phenylalanyl-tRNA(Phe) + AMP + diphosphate + H(+). This Gloeobacter violaceus (strain ATCC 29082 / PCC 7421) protein is Phenylalanine--tRNA ligase beta subunit.